Reading from the N-terminus, the 442-residue chain is GDP-L-galactose phosphorylase 1 (442 aa).

Histidine 238 (tele-GMP-histidine intermediate) is an active-site residue.

This sequence belongs to the GDPGP1 family. Interacts with TLP1. Expressed in leaves, stems, roots, flowers and siliques. Highest expression in green tissues.

The protein resides in the cytoplasm. It is found in the nucleus. The catalysed reaction is GDP-beta-L-galactose + phosphate = beta-L-galactose 1-phosphate + GDP + H(+). The protein operates within cofactor biosynthesis; L-ascorbate biosynthesis via GDP-alpha-D-mannose pathway; L-ascorbate from GDP-alpha-D-mannose: step 2/5. Not inhibited by dithiothreitol, N-ethylmaleimide, phenylmethane sulfonyl fluoride, ascorbate, L-galactose and L-galactonolactone. Its function is as follows. Catalyzes a reaction of the Smirnoff-Wheeler pathway, the major route to ascorbate biosynthesis in plants. Acts as a phosphorylase rather than as a transferase. Uses preferentially GDP-L-galactose and GDP-D-glucose as substrates. Lower activity with GDP-L-fucose, very low activity with GDP-D-mannose, and no activity with UDP-D-glucose, UDP-D-galactose or ADP-D-glucose. Highly specific for inorganic phosphate as the guanylyl acceptor. This Arabidopsis thaliana (Mouse-ear cress) protein is GDP-L-galactose phosphorylase 1 (VTC2).